Reading from the N-terminus, the 80-residue chain is Omega-conotoxin-like 2/7 (80 aa).

Positions 1–22 are cleaved as a signal peptide; it reads MKLTCMMIVAVMFLTASIFITA. A propeptide spanning residues 23–51 is cleaved from the precursor; it reads DNSRNGIENLPRMRRHEMKKPKASKLNKR. Intrachain disulfides connect cysteine 53–cysteine 71, cysteine 60–cysteine 75, and cysteine 70–cysteine 79.

The protein belongs to the conotoxin O1 superfamily. In terms of tissue distribution, expressed by the venom duct.

It is found in the secreted. Functionally, omega-conotoxins act at presynaptic membranes, they bind and block voltage-gated calcium channels (Cav). This chain is Omega-conotoxin-like 2/7, found in Conus imperialis (Imperial cone).